Here is a 156-residue protein sequence, read N- to C-terminus: Small ribosomal subunit protein uS7 (156 aa).

It belongs to the universal ribosomal protein uS7 family. Part of the 30S ribosomal subunit. Contacts proteins S9 and S11.

Its function is as follows. One of the primary rRNA binding proteins, it binds directly to 16S rRNA where it nucleates assembly of the head domain of the 30S subunit. Is located at the subunit interface close to the decoding center, probably blocks exit of the E-site tRNA. The protein is Small ribosomal subunit protein uS7 of Oceanobacillus iheyensis (strain DSM 14371 / CIP 107618 / JCM 11309 / KCTC 3954 / HTE831).